Reading from the N-terminus, the 140-residue chain is Secreted RxLR effector protein 37 (140 aa).

Positions 1-22 (MTYRLPFVAVILFVTAKHVVLA) are cleaved as a signal peptide. The RxLR-dEER motif lies at 57–76 (RFLRQLEKKPGVNDKRDEER).

Belongs to the RxLR effector family.

It is found in the secreted. It localises to the host nucleus. Its subcellular location is the host cytoplasm. Functionally, secreted effector that completely suppresses the host cell death induced by cell death-inducing proteins. This Plasmopara viticola (Downy mildew of grapevine) protein is Secreted RxLR effector protein 37.